Here is a 296-residue protein sequence, read N- to C-terminus: Coiled-coil domain-containing protein 69 (296 aa).

The span at 1–18 shows a compositional bias: basic residues; that stretch reads MGCRHSRLSSCKPPKKKR. The interval 1–41 is disordered; sequence MGCRHSRLSSCKPPKKKRQEPEPEQPPRPEPHELGPLNGDT. Gly2 carries the N-myristoyl glycine lipid modification. Over residues 19–33 the composition is skewed to basic and acidic residues; the sequence is QEPEPEQPPRPEPHE. The stretch at 48–272 forms a coiled coil; that stretch reads CASEEAERHQ…QEKEELLYRV (225 aa). Phosphoserine is present on residues Ser154 and Ser241.

This sequence belongs to the CCDC69 family. Highly expressed in duodenum, esophagus, pancreas, prostate, salivary gland, thymus and urinary bladder.

It localises to the cytoplasm. Its subcellular location is the cytoskeleton. The protein resides in the spindle. The protein localises to the midbody. May act as a scaffold to regulate the recruitment and assembly of spindle midzone components. Required for the localization of AURKB and PLK1 to the spindle midzone. This chain is Coiled-coil domain-containing protein 69, found in Homo sapiens (Human).